The primary structure comprises 590 residues: O-fucosyltransferase 2 (590 aa).

Residues 1-16 (MGQERPNDEERPESRD) are compositionally biased toward basic and acidic residues. The segment at 1-26 (MGQERPNDEERPESRDLGVYGCSPPH) is disordered. A helical; Signal-anchor for type II membrane protein transmembrane segment spans residues 67 to 87 (TAIGVMAILGFFCLVNWFMLS). The N-linked (GlcNAc...) asparagine glycan is linked to N125. 365–367 (HLR) lines the substrate pocket. N-linked (GlcNAc...) asparagine glycosylation is found at N485 and N546.

It belongs to the glycosyltransferase GT106 family.

The protein localises to the membrane. It participates in glycan metabolism. This chain is O-fucosyltransferase 2, found in Arabidopsis thaliana (Mouse-ear cress).